A 137-amino-acid chain; its full sequence is MRTLGVDLGRVRIGLAVADEILRTARAVTTVVRRTEAEDLAAIAEVARDYEVTRAVVGLPLNMDGTEGPSARLARGFAPRLEAALGVPVELFDERLSSFEAESRLRARGLSAREQRGQVDAEAAAVILQGWLDRRAP.

The protein belongs to the YqgF nuclease family.

It localises to the cytoplasm. Could be a nuclease involved in processing of the 5'-end of pre-16S rRNA. In Anaeromyxobacter dehalogenans (strain 2CP-1 / ATCC BAA-258), this protein is Putative pre-16S rRNA nuclease.